The sequence spans 430 residues: Glutamyl-tRNA reductase (430 aa).

Residues 50-53 (TCNR), Ser-108, 113-115 (EPQ), and Gln-119 contribute to the substrate site. Cys-51 acts as the Nucleophile in catalysis. 188–193 (GAGEMA) contributes to the NADP(+) binding site.

Belongs to the glutamyl-tRNA reductase family. Homodimer.

It catalyses the reaction (S)-4-amino-5-oxopentanoate + tRNA(Glu) + NADP(+) = L-glutamyl-tRNA(Glu) + NADPH + H(+). It functions in the pathway porphyrin-containing compound metabolism; protoporphyrin-IX biosynthesis; 5-aminolevulinate from L-glutamyl-tRNA(Glu): step 1/2. Functionally, catalyzes the NADPH-dependent reduction of glutamyl-tRNA(Glu) to glutamate 1-semialdehyde (GSA). In Desulfovibrio desulfuricans (strain ATCC 27774 / DSM 6949 / MB), this protein is Glutamyl-tRNA reductase.